Here is a 239-residue protein sequence, read N- to C-terminus: Ribosomal RNA small subunit methyltransferase G (239 aa).

Residues glycine 77, phenylalanine 82, 128–129, and arginine 147 contribute to the S-adenosyl-L-methionine site; that span reads AE. The interval 216 to 239 is disordered; the sequence is EKKKQTPKKYPRKPGTPNKSPIEG.

Belongs to the methyltransferase superfamily. RNA methyltransferase RsmG family.

It is found in the cytoplasm. Specifically methylates the N7 position of guanine in position 535 of 16S rRNA. The polypeptide is Ribosomal RNA small subunit methyltransferase G (Bacillus pumilus (strain SAFR-032)).